A 511-amino-acid polypeptide reads, in one-letter code: Bifunctional purine biosynthesis protein PurH (511 aa).

One can recognise an MGS-like domain in the interval Met-1–Val-145.

The protein belongs to the PurH family.

It catalyses the reaction (6R)-10-formyltetrahydrofolate + 5-amino-1-(5-phospho-beta-D-ribosyl)imidazole-4-carboxamide = 5-formamido-1-(5-phospho-D-ribosyl)imidazole-4-carboxamide + (6S)-5,6,7,8-tetrahydrofolate. It carries out the reaction IMP + H2O = 5-formamido-1-(5-phospho-D-ribosyl)imidazole-4-carboxamide. It participates in purine metabolism; IMP biosynthesis via de novo pathway; 5-formamido-1-(5-phospho-D-ribosyl)imidazole-4-carboxamide from 5-amino-1-(5-phospho-D-ribosyl)imidazole-4-carboxamide (10-formyl THF route): step 1/1. Its pathway is purine metabolism; IMP biosynthesis via de novo pathway; IMP from 5-formamido-1-(5-phospho-D-ribosyl)imidazole-4-carboxamide: step 1/1. This chain is Bifunctional purine biosynthesis protein PurH, found in Bacillus cereus (strain ATCC 14579 / DSM 31 / CCUG 7414 / JCM 2152 / NBRC 15305 / NCIMB 9373 / NCTC 2599 / NRRL B-3711).